The chain runs to 84 residues: Mitochondrial import inner membrane translocase subunit Tim9 (84 aa).

Positions 36–60 match the Twin CX3C motif motif; it reads CFQSCITNFRIRKLDDEEQLCVYKC. 2 cysteine pairs are disulfide-bonded: C36-C60 and C40-C56.

It belongs to the small Tim family. As to quaternary structure, heterohexamer; composed of 3 copies of timm9 and 3 copies of timm10, named soluble 70 kDa complex. Associates directly with the TIM22 complex, whose core is composed of timm22. Interacts with the transmembrane regions of multi-pass transmembrane proteins in transit.

It localises to the mitochondrion inner membrane. Its function is as follows. Component of the TIM22 complex, a complex that mediates the import and insertion of multi-pass transmembrane proteins into the mitochondrial inner membrane. The TIM22 complex forms a twin-pore translocase that uses the membrane potential as external driving force. This chain is Mitochondrial import inner membrane translocase subunit Tim9 (timm9), found in Dictyostelium discoideum (Social amoeba).